Reading from the N-terminus, the 471-residue chain is UDP-N-acetylmuramate--L-alanine ligase (471 aa).

114-120 (GTHGKTT) provides a ligand contact to ATP.

It belongs to the MurCDEF family.

The protein localises to the cytoplasm. It carries out the reaction UDP-N-acetyl-alpha-D-muramate + L-alanine + ATP = UDP-N-acetyl-alpha-D-muramoyl-L-alanine + ADP + phosphate + H(+). The protein operates within cell wall biogenesis; peptidoglycan biosynthesis. Its function is as follows. Cell wall formation. This Methylobacterium sp. (strain 4-46) protein is UDP-N-acetylmuramate--L-alanine ligase.